The primary structure comprises 436 residues: Putative ankyrin repeat protein FPV026 (436 aa).

ANK repeat units follow at residues 63-92 (EGIR…NVNE), 101-130 (TCYS…DVNN), 135-164 (LRNT…DQNI), 168-197 (NGNI…NLEI), 201-230 (NGRT…LVDS), and 234-266 (EGYT…FLNI). The F-box domain maps to 409–436 (TSTITNLPYEVIYIIVEKMTNKELCEIR).

This is Putative ankyrin repeat protein FPV026 from Fowlpox virus (strain NVSL) (FPV).